The following is a 94-amino-acid chain: Selenoprotein K (94 aa).

A helical transmembrane segment spans residues 20 to 42; it reads LSFITDFFWGIAEFVVFFFKTLL. The tract at residues 48–94 is disordered; sequence KRRGYGGSSDSRYDDGRGPPGNPPRRMGRISHLRGPSPPPMAGGUGR. A non-standard amino acid (selenocysteine) is located at residue Sec92.

Belongs to the selenoprotein K family. Interacts with DERL1, DERL2, DERL3 and SELENOS. The SELENOK-SELENOS complex interacts with VCP. Interacts with ZDHHC6. Cleaved by CAPN2/m-calpain in resting macrophages but not in activated macrophages. Macrophage activation up-regulates expression of the calpain inhibitor CAST/calpastatin, resulting in inhibition of CAPN2 activity. In terms of processing, truncated SELENOK proteins produced by failed UGA/Sec decoding are ubiquitinated by the CRL2(KLHDC2) complex, which recognizes the diglycine (Gly-Gly) at the C-terminus of truncated SELENOK proteins.

It is found in the endoplasmic reticulum membrane. It localises to the cell membrane. Required for Ca(2+) flux in immune cells and plays a role in T-cell proliferation and in T-cell and neutrophil migration. Involved in endoplasmic reticulum-associated degradation (ERAD) of soluble glycosylated proteins. Required for palmitoylation and cell surface expression of CD36 and involved in macrophage uptake of low-density lipoprotein and in foam cell formation. Together with ZDHHC6, required for palmitoylation of ITPR1 in immune cells, leading to regulate ITPR1 stability and function. Plays a role in protection of cells from ER stress-induced apoptosis. Protects cells from oxidative stress when overexpressed in cardiomyocytes. In Rattus norvegicus (Rat), this protein is Selenoprotein K.